Reading from the N-terminus, the 255-residue chain is 5-oxoprolinase subunit A (255 aa).

Belongs to the LamB/PxpA family. Forms a complex composed of PxpA, PxpB and PxpC.

It carries out the reaction 5-oxo-L-proline + ATP + 2 H2O = L-glutamate + ADP + phosphate + H(+). Functionally, catalyzes the cleavage of 5-oxoproline to form L-glutamate coupled to the hydrolysis of ATP to ADP and inorganic phosphate. This chain is 5-oxoprolinase subunit A, found in Pyrococcus furiosus (strain ATCC 43587 / DSM 3638 / JCM 8422 / Vc1).